A 266-amino-acid chain; its full sequence is Oxygen-evolving enhancer protein 2-3, chloroplastic (266 aa).

The transit peptide at 1–80 (MASTQCFLHH…VGSKVSPADA (80 aa)) directs the protein to the chloroplast.

It belongs to the PsbP family.

It localises to the plastid. The protein resides in the chloroplast thylakoid membrane. In terms of biological role, may be involved in the regulation of photosystem II. In Nicotiana tabacum (Common tobacco), this protein is Oxygen-evolving enhancer protein 2-3, chloroplastic (PSBP3).